We begin with the raw amino-acid sequence, 516 residues long: MNLISKKNELKQGFYPLFFLEEFYIRVLIHMNHNHILKIGNIKQSKLIHVNRICHYLLIKRLIRQIRKQSHKYNGISEFPNYETEFYFQYKNRFYNLMIENVFLLILQMIWQHQKTRKNDPCILIHRSIQSTFPFLENKIIHCIWIIHGNIQLFHTIQQLNFLFLLLYERIRDKSFLHLLKNIFNLKKELLIEAFYCDKFHLIELSMFFRNLYINEFDSFIVYHIVKTWKLAYLLNPSQAIDDSSFIQKNHILLNIKRKQKSLPLVSWLANRSFYSLYGNIHYVRRDLSFLMAIQAGKHISRFWKYNSINFLQLKLGFPCSLDVLYLKSLFNQDFLFLGYRIVNKLWKKNFKIRAVSWYSPILFFFKGRRISTKMPVLNLIHRLSVMHLCNLEGYPIHKAAWSVFNDKQIMNIFSNLLRNIILYYSGCSNRSDLGKIQYILEFSCMKTLAFKHKSSIRSTWTQYKKHVSLLSLVKNRHKNGKTSVDLYFLFQKTNKLWLLDLSKIQDSLACFIFID.

The protein belongs to the intron maturase 2 family. MatK subfamily.

The protein resides in the plastid. It is found in the chloroplast. Its function is as follows. Usually encoded in the trnK tRNA gene intron. Probably assists in splicing its own and other chloroplast group II introns. In Chara globularis (Fragile stonewort), this protein is Maturase K.